A 338-amino-acid chain; its full sequence is Glycerol-3-phosphate dehydrogenase [NAD(P)+] (338 aa).

4 residues coordinate NADPH: Ser-14, Tyr-15, His-35, and Lys-109. 3 residues coordinate sn-glycerol 3-phosphate: Lys-109, Gly-138, and Thr-140. Ala-142 is an NADPH binding site. Lys-194, Asp-247, Ser-257, Arg-258, and Asn-259 together coordinate sn-glycerol 3-phosphate. Lys-194 serves as the catalytic Proton acceptor. An NADPH-binding site is contributed by Arg-258. The NADPH site is built by Val-282 and Glu-284.

Belongs to the NAD-dependent glycerol-3-phosphate dehydrogenase family.

It is found in the cytoplasm. The enzyme catalyses sn-glycerol 3-phosphate + NAD(+) = dihydroxyacetone phosphate + NADH + H(+). The catalysed reaction is sn-glycerol 3-phosphate + NADP(+) = dihydroxyacetone phosphate + NADPH + H(+). The protein operates within membrane lipid metabolism; glycerophospholipid metabolism. In terms of biological role, catalyzes the reduction of the glycolytic intermediate dihydroxyacetone phosphate (DHAP) to sn-glycerol 3-phosphate (G3P), the key precursor for phospholipid synthesis. The polypeptide is Glycerol-3-phosphate dehydrogenase [NAD(P)+] (Shewanella frigidimarina (strain NCIMB 400)).